The chain runs to 414 residues: 2,3-diketo-5-methylthiopentyl-1-phosphate enolase (414 aa).

Lys-99 acts as the Proton acceptor in catalysis. Substrate is bound by residues Lys-148, 174–177, His-265, Gly-338, and 360–361; these read KDDE and GG. Positions 174, 176, and 177 each coordinate Mg(2+). Lys-174 bears the N6-carboxylysine mark.

The protein belongs to the RuBisCO large chain family. Type IV subfamily. Homodimer. Requires Mg(2+) as cofactor.

It carries out the reaction 5-methylsulfanyl-2,3-dioxopentyl phosphate = 2-hydroxy-5-methylsulfanyl-3-oxopent-1-enyl phosphate. It functions in the pathway amino-acid biosynthesis; L-methionine biosynthesis via salvage pathway; L-methionine from S-methyl-5-thio-alpha-D-ribose 1-phosphate: step 3/6. Its function is as follows. Catalyzes the enolization of 2,3-diketo-5-methylthiopentyl-1-phosphate (DK-MTP-1-P) into 2-hydroxy-3-keto-5-methylthiopentenyl-1-phosphate (HK-MTPenyl-1-P). This is 2,3-diketo-5-methylthiopentyl-1-phosphate enolase from Bacillus cereus (strain AH187).